The primary structure comprises 159 residues: Ribosomal RNA large subunit methyltransferase H (159 aa).

S-adenosyl-L-methionine is bound by residues Leu-76, Gly-108, and 127-132 (FGQLTL).

Belongs to the RNA methyltransferase RlmH family. Homodimer.

It is found in the cytoplasm. The catalysed reaction is pseudouridine(1915) in 23S rRNA + S-adenosyl-L-methionine = N(3)-methylpseudouridine(1915) in 23S rRNA + S-adenosyl-L-homocysteine + H(+). Its function is as follows. Specifically methylates the pseudouridine at position 1915 (m3Psi1915) in 23S rRNA. This is Ribosomal RNA large subunit methyltransferase H from Streptococcus suis (strain 05ZYH33).